The primary structure comprises 275 residues: Thiazole synthase (275 aa).

Catalysis depends on Lys116, which acts as the Schiff-base intermediate with DXP. Residues Gly177, 203–204 (AG), and 225–226 (NT) each bind 1-deoxy-D-xylulose 5-phosphate.

Belongs to the ThiG family. In terms of assembly, homotetramer. Forms heterodimers with either ThiH or ThiS.

It is found in the cytoplasm. It carries out the reaction [ThiS sulfur-carrier protein]-C-terminal-Gly-aminoethanethioate + 2-iminoacetate + 1-deoxy-D-xylulose 5-phosphate = [ThiS sulfur-carrier protein]-C-terminal Gly-Gly + 2-[(2R,5Z)-2-carboxy-4-methylthiazol-5(2H)-ylidene]ethyl phosphate + 2 H2O + H(+). Its pathway is cofactor biosynthesis; thiamine diphosphate biosynthesis. Catalyzes the rearrangement of 1-deoxy-D-xylulose 5-phosphate (DXP) to produce the thiazole phosphate moiety of thiamine. Sulfur is provided by the thiocarboxylate moiety of the carrier protein ThiS. In vitro, sulfur can be provided by H(2)S. The polypeptide is Thiazole synthase (Acaryochloris marina (strain MBIC 11017)).